The chain runs to 240 residues: Phosducin-like protein 2 (240 aa).

A Phosducin domain is found at 54 to 214; that stretch reads QRDKKIDDMS…MLGQAGAVPT (161 aa). A phosphoserine mark is found at Ser-63 and Ser-73. Residues 99–240 form a thioredoxin fold region; that stretch reads FGSVREISGQ…DLEDKSSDFY (142 aa).

Belongs to the phosducin family.

The protein localises to the cytoplasm. Modulates the activation of caspases during apoptosis. The polypeptide is Phosducin-like protein 2 (Drosophila melanogaster (Fruit fly)).